The primary structure comprises 199 residues: V-type ATP synthase subunit E (199 aa).

It belongs to the V-ATPase E subunit family.

Functionally, produces ATP from ADP in the presence of a proton gradient across the membrane. The protein is V-type ATP synthase subunit E of Clostridium botulinum (strain Hall / ATCC 3502 / NCTC 13319 / Type A).